A 256-amino-acid polypeptide reads, in one-letter code: 5-oxoprolinase subunit A (256 aa).

It belongs to the LamB/PxpA family. Forms a complex composed of PxpA, PxpB and PxpC.

It carries out the reaction 5-oxo-L-proline + ATP + 2 H2O = L-glutamate + ADP + phosphate + H(+). Its function is as follows. Catalyzes the cleavage of 5-oxoproline to form L-glutamate coupled to the hydrolysis of ATP to ADP and inorganic phosphate. This is 5-oxoprolinase subunit A from Geobacillus kaustophilus (strain HTA426).